A 143-amino-acid polypeptide reads, in one-letter code: Anti-sigma F factor (143 aa).

Belongs to the anti-sigma-factor family.

The enzyme catalyses L-seryl-[protein] + ATP = O-phospho-L-seryl-[protein] + ADP + H(+). It catalyses the reaction L-threonyl-[protein] + ATP = O-phospho-L-threonyl-[protein] + ADP + H(+). Binds to sigma F and blocks its ability to form an RNA polymerase holoenzyme (E-sigma F). Phosphorylates SpoIIAA on a serine residue. This phosphorylation may enable SpoIIAA to act as an anti-anti-sigma factor that counteracts SpoIIAB and thus releases sigma F from inhibition. This chain is Anti-sigma F factor, found in Clostridium botulinum (strain Eklund 17B / Type B).